We begin with the raw amino-acid sequence, 328 residues long: Arabinose 5-phosphate isomerase KdsD (328 aa).

The region spanning A41–F184 is the SIS domain. Substrate contacts are provided by residues G75–T76, H82, H88, A114–H123, and K148–P150. H82 is a binding site for Zn(2+). In terms of domain architecture, CBS 1 spans M210 to M268. E275 is a substrate binding site. In terms of domain architecture, CBS 2 spans M277–V328.

Belongs to the SIS family. GutQ/KpsF subfamily. In terms of assembly, homotetramer.

It catalyses the reaction D-arabinose 5-phosphate = D-ribulose 5-phosphate. It participates in carbohydrate biosynthesis; 3-deoxy-D-manno-octulosonate biosynthesis; 3-deoxy-D-manno-octulosonate from D-ribulose 5-phosphate: step 1/3. The protein operates within bacterial outer membrane biogenesis; lipopolysaccharide biosynthesis. In terms of biological role, involved in the biosynthesis of 3-deoxy-D-manno-octulosonate (KDO), a unique 8-carbon sugar component of lipopolysaccharides (LPSs). Catalyzes the reversible aldol-ketol isomerization between D-ribulose 5-phosphate (Ru5P) and D-arabinose 5-phosphate (A5P). This chain is Arabinose 5-phosphate isomerase KdsD (kdsD), found in Salmonella typhimurium (strain LT2 / SGSC1412 / ATCC 700720).